The sequence spans 37 residues: Mastoparan-VT (37 aa).

Positions 1–22 (EALADPIADPVAGPNPEADPEA) are excised as a propeptide. AXPX repeat units lie at residues 4 to 7 (ADPI), 8 to 11 (ADPV), 12 to 15 (AGPN), and 18 to 21 (ADPE). Leucine 36 carries the leucine amide modification.

The protein belongs to the MCD family. Mastoparan subfamily. In terms of tissue distribution, expressed by the venom gland.

The protein resides in the secreted. Its subcellular location is the target cell membrane. Antimicrobial peptide with potent activity against both Gram-positive (S.aureus MIC=50 ug/ml, and B.subtilis MIC=25 ug/ml) and Gram-negative bacteria (P.aeruginosa MIC=25 ug/ml, E.coli MIC=3-50 ug/ml, K.pneumoniae MIC=25 ug/ml). Exhibits little hemolytic activity on human erythrocytes. The polypeptide is Mastoparan-VT (Vespa tropica (Greater banded hornet)).